A 253-amino-acid chain; its full sequence is Probable proteasome subunit alpha type-7 (253 aa).

Residue Ser-104 is modified to Phosphoserine.

It belongs to the peptidase T1A family. As to quaternary structure, the 26S proteasome consists of a 20S proteasome core and two 19S regulatory subunits. The 20S proteasome core is composed of 28 subunits that are arranged in four stacked rings, resulting in a barrel-shaped structure. The two end rings are each formed by seven alpha subunits, and the two central rings are each formed by seven beta subunits. The catalytic chamber with the active sites is on the inside of the barrel.

The protein localises to the cytoplasm. It is found in the nucleus. Functionally, the proteasome is a multicatalytic proteinase complex which is characterized by its ability to cleave peptides with Arg, Phe, Tyr, Leu, and Glu adjacent to the leaving group at neutral or slightly basic pH. The proteasome has an ATP-dependent proteolytic activity. The polypeptide is Probable proteasome subunit alpha type-7 (pre10) (Schizosaccharomyces pombe (strain 972 / ATCC 24843) (Fission yeast)).